Here is a 99-residue protein sequence, read N- to C-terminus: Aspartyl/glutamyl-tRNA(Asn/Gln) amidotransferase subunit C (99 aa).

This sequence belongs to the GatC family. As to quaternary structure, heterotrimer of A, B and C subunits.

The enzyme catalyses L-glutamyl-tRNA(Gln) + L-glutamine + ATP + H2O = L-glutaminyl-tRNA(Gln) + L-glutamate + ADP + phosphate + H(+). It carries out the reaction L-aspartyl-tRNA(Asn) + L-glutamine + ATP + H2O = L-asparaginyl-tRNA(Asn) + L-glutamate + ADP + phosphate + 2 H(+). Allows the formation of correctly charged Asn-tRNA(Asn) or Gln-tRNA(Gln) through the transamidation of misacylated Asp-tRNA(Asn) or Glu-tRNA(Gln) in organisms which lack either or both of asparaginyl-tRNA or glutaminyl-tRNA synthetases. The reaction takes place in the presence of glutamine and ATP through an activated phospho-Asp-tRNA(Asn) or phospho-Glu-tRNA(Gln). This Mycolicibacterium smegmatis (strain ATCC 700084 / mc(2)155) (Mycobacterium smegmatis) protein is Aspartyl/glutamyl-tRNA(Asn/Gln) amidotransferase subunit C.